The following is a 601-amino-acid chain: DNA mismatch repair protein MutL (601 aa).

This sequence belongs to the DNA mismatch repair MutL/HexB family.

In terms of biological role, this protein is involved in the repair of mismatches in DNA. It is required for dam-dependent methyl-directed DNA mismatch repair. May act as a 'molecular matchmaker', a protein that promotes the formation of a stable complex between two or more DNA-binding proteins in an ATP-dependent manner without itself being part of a final effector complex. This Listeria monocytogenes serovar 1/2a (strain ATCC BAA-679 / EGD-e) protein is DNA mismatch repair protein MutL.